The following is a 172-amino-acid chain: NADH-ubiquinone oxidoreductase chain 6 (172 aa).

5 helical membrane-spanning segments follow: residues 1–21 (MTYFVLFLGLCFVLGGLAVAS), 27–47 (YGVVGLVLASVAGCGWLLSLG), 48–68 (ISFVSLVLFMVYLGGMLVVFV), 87–107 (VVGYGMGFVAVLVAGVVVGGF), and 138–158 (CGVGMFLAAGWGLLLTLFVVL).

It belongs to the complex I subunit 6 family.

The protein localises to the mitochondrion membrane. The enzyme catalyses a ubiquinone + NADH + 5 H(+)(in) = a ubiquinol + NAD(+) + 4 H(+)(out). Functionally, core subunit of the mitochondrial membrane respiratory chain NADH dehydrogenase (Complex I) that is believed to belong to the minimal assembly required for catalysis. Complex I functions in the transfer of electrons from NADH to the respiratory chain. The immediate electron acceptor for the enzyme is believed to be ubiquinone. The protein is NADH-ubiquinone oxidoreductase chain 6 (MT-ND6) of Uria aalge (Common mure).